The following is a 419-amino-acid chain: UDP-N-acetylglucosamine 1-carboxyvinyltransferase (419 aa).

Phosphoenolpyruvate is bound at residue 22 to 23 (KN). Arginine 92 lines the UDP-N-acetyl-alpha-D-glucosamine pocket. Cysteine 116 serves as the catalytic Proton donor. A 2-(S-cysteinyl)pyruvic acid O-phosphothioketal modification is found at cysteine 116. The UDP-N-acetyl-alpha-D-glucosamine site is built by aspartate 306 and isoleucine 328.

It belongs to the EPSP synthase family. MurA subfamily.

The protein resides in the cytoplasm. The catalysed reaction is phosphoenolpyruvate + UDP-N-acetyl-alpha-D-glucosamine = UDP-N-acetyl-3-O-(1-carboxyvinyl)-alpha-D-glucosamine + phosphate. It participates in cell wall biogenesis; peptidoglycan biosynthesis. Functionally, cell wall formation. Adds enolpyruvyl to UDP-N-acetylglucosamine. In Psychromonas ingrahamii (strain DSM 17664 / CCUG 51855 / 37), this protein is UDP-N-acetylglucosamine 1-carboxyvinyltransferase.